The sequence spans 273 residues: Dermonecrotic toxin LapSicTox-alphaIB1b2 (273 aa).

Residue H5 is part of the active site. Positions 25 and 27 each coordinate Mg(2+). The active-site Nucleophile is the H41. 2 disulfide bridges follow: C45-C51 and C47-C190. A Mg(2+)-binding site is contributed by D85. N-linked (GlcNAc...) asparagine glycosylation occurs at N250.

The protein belongs to the arthropod phospholipase D family. Class II subfamily. Requires Mg(2+) as cofactor. Expressed by the venom gland.

Its subcellular location is the secreted. It catalyses the reaction an N-(acyl)-sphingosylphosphocholine = an N-(acyl)-sphingosyl-1,3-cyclic phosphate + choline. It carries out the reaction an N-(acyl)-sphingosylphosphoethanolamine = an N-(acyl)-sphingosyl-1,3-cyclic phosphate + ethanolamine. The enzyme catalyses a 1-acyl-sn-glycero-3-phosphocholine = a 1-acyl-sn-glycero-2,3-cyclic phosphate + choline. The catalysed reaction is a 1-acyl-sn-glycero-3-phosphoethanolamine = a 1-acyl-sn-glycero-2,3-cyclic phosphate + ethanolamine. Functionally, dermonecrotic toxins cleave the phosphodiester linkage between the phosphate and headgroup of certain phospholipids (sphingolipid and lysolipid substrates), forming an alcohol (often choline) and a cyclic phosphate. This toxin acts on sphingomyelin (SM). It may also act on ceramide phosphoethanolamine (CPE), lysophosphatidylcholine (LPC) and lysophosphatidylethanolamine (LPE), but not on lysophosphatidylserine (LPS), and lysophosphatidylglycerol (LPG). It acts by transphosphatidylation, releasing exclusively cyclic phosphate products as second products. Induces dermonecrosis, hemolysis, increased vascular permeability, edema, inflammatory response, and platelet aggregation. The chain is Dermonecrotic toxin LapSicTox-alphaIB1b2 from Loxosceles apachea (Apache recluse spider).